The primary structure comprises 189 residues: Movement protein (189 aa).

Belongs to the tombusvirus/aureusvirus movement protein p22 family.

It localises to the host membrane. Transports viral genome to neighboring plant cells directly through plasmosdesmata, without any budding. The movement protein allows efficient cell to cell propagation, by bypassing the host cell wall barrier. The sequence is that of Movement protein from Artichoke mottled crinkle virus (AMCV).